Reading from the N-terminus, the 353-residue chain is tRNA N6-adenosine threonylcarbamoyltransferase (353 aa).

The Fe cation site is built by H109 and H113. Substrate is bound by residues 136–140 (TVSGG), D169, G182, D186, and N284. D312 is a binding site for Fe cation.

Belongs to the KAE1 / TsaD family. Fe(2+) serves as cofactor.

It is found in the cytoplasm. It carries out the reaction L-threonylcarbamoyladenylate + adenosine(37) in tRNA = N(6)-L-threonylcarbamoyladenosine(37) in tRNA + AMP + H(+). Required for the formation of a threonylcarbamoyl group on adenosine at position 37 (t(6)A37) in tRNAs that read codons beginning with adenine. Is involved in the transfer of the threonylcarbamoyl moiety of threonylcarbamoyl-AMP (TC-AMP) to the N6 group of A37, together with TsaE and TsaB. TsaD likely plays a direct catalytic role in this reaction. This chain is tRNA N6-adenosine threonylcarbamoyltransferase, found in Chlorobium limicola (strain DSM 245 / NBRC 103803 / 6330).